Consider the following 309-residue polypeptide: Taste receptor type 2 member 20 (309 aa).

Residues 1–6 are Extracellular-facing; sequence MMSFLH. A helical membrane pass occupies residues 7 to 27; the sequence is IVFSILVVVAFILGNFANGFI. Residues 28 to 46 are Cytoplasmic-facing; that stretch reads ALINFIAWVKRQKISSADQ. A helical membrane pass occupies residues 47-67; that stretch reads IIAALAVSRVGLLWVILLHWY. The Extracellular portion of the chain corresponds to 68 to 79; it reads STVLNPTSSNLK. Residues 80 to 100 form a helical membrane-spanning segment; it reads VIIFISNAWAVTNHFSIWLAT. Over 101 to 125 the chain is Cytoplasmic; it reads SLSIFYLLKIVNFSRLIFHHLKRKA. A helical transmembrane segment spans residues 126-146; that stretch reads KSVVLVIVLGSLFFLVCHLVM. Over 147 to 178 the chain is Extracellular; the sequence is KNTYINVWTEECEGNVTWKIKLRNAMHLSNLT. A helical membrane pass occupies residues 179–199; that stretch reads VAMLANLIPFTLTLISFLLLI. At 200–229 the chain is on the cytoplasmic side; sequence YSLCKHLKKMQLHGKGSQDPSTKIHIKALQ. The helical transmembrane segment at 230–250 threads the bilayer; the sequence is TVTSFLILLAIYFLCLITSFW. The Extracellular portion of the chain corresponds to 251-259; it reads NSKMRPKEI. A helical membrane pass occupies residues 260-280; sequence VLMLCQAFGIIYPSFHSFILI. Residues 281–309 are Cytoplasmic-facing; sequence WGNKTLKQTFLSVLWQVTCWAKGQNQSTP.

Belongs to the G-protein coupled receptor T2R family.

The protein localises to the membrane. In terms of biological role, receptor that may play a role in the perception of bitterness and is gustducin-linked. May play a role in sensing the chemical composition of the gastrointestinal content. The activity of this receptor may stimulate alpha gustducin, mediate PLC-beta-2 activation and lead to the gating of TRPM5. The protein is Taste receptor type 2 member 20 (TAS2R20) of Pan paniscus (Pygmy chimpanzee).